Here is a 231-residue protein sequence, read N- to C-terminus: D-allulose-6-phosphate 3-epimerase (231 aa).

Ser-6 is a substrate binding site. Residues His-30, Asp-32, and His-63 each contribute to the a divalent metal cation site. The Proton acceptor role is filled by Asp-32. Substrate-binding positions include His-63, 140–143 (GFAG), 173–175 (DGS), and 195–197 (GTS). Asp-173 is a binding site for a divalent metal cation. The Proton donor role is filled by Asp-173.

This sequence belongs to the ribulose-phosphate 3-epimerase family. AlsE subfamily. Homohexamer. Trimer of dimers. It depends on Co(2+) as a cofactor. Mn(2+) serves as cofactor. The cofactor is Zn(2+).

The enzyme catalyses D-allulose 6-phosphate = keto-D-fructose 6-phosphate. It functions in the pathway carbohydrate degradation; D-allose degradation. Functionally, catalyzes the reversible epimerization of D-allulose 6-phosphate to D-fructose 6-phosphate. Can also catalyze with lower efficiency the reversible epimerization of D-ribulose 5-phosphate to D-xylulose 5-phosphate. In Escherichia coli (strain K12), this protein is D-allulose-6-phosphate 3-epimerase.